A 335-amino-acid polypeptide reads, in one-letter code: Phosphate acyltransferase (335 aa).

It belongs to the PlsX family. Homodimer. Probably interacts with PlsY.

The protein resides in the cytoplasm. It carries out the reaction a fatty acyl-[ACP] + phosphate = an acyl phosphate + holo-[ACP]. It functions in the pathway lipid metabolism; phospholipid metabolism. In terms of biological role, catalyzes the reversible formation of acyl-phosphate (acyl-PO(4)) from acyl-[acyl-carrier-protein] (acyl-ACP). This enzyme utilizes acyl-ACP as fatty acyl donor, but not acyl-CoA. This chain is Phosphate acyltransferase, found in Streptococcus pyogenes serotype M28 (strain MGAS6180).